A 724-amino-acid polypeptide reads, in one-letter code: MSGQLNVAEDSVLLDDISISSIQPIVSDVPAAEDVGDEDHISGASIAENRPKDPTLVKYHAACQRGDLKTVKDMIEAGVIDVKADWDEEEQVSGLHWASANNRLNLVRYLIAQGADVNIKGGDLEATPLHWASKSGYVYIVHCLLEHGADPLITDRQGYNLLHTSTFSSEVMLITYVLFTGQIPVDSPDPTGKTALHWAAYQGDPNTVEALLKFDADVRVVDTGGFTPLHWATVKGHPHVLKALIEHGSDVFLKNNDGKNALMIAQEMNTQKALQNALYECGFNKDGFAIRKYFKNPMHAKMVTFFTPWLILGLILSFFAYFSILLAILGCLLTVLAAGYGLYNFVFPSFILMKRIVIFKTPLLAGILSGTIFWLLYVWLFKMLPATFDDEPILNLTVFALFAGVVFLLTKLLQSDPGYIVPATDHNQIRATIIELLRVGKYDSKHFCIHSWIRLPLRAKYKRFVHSVILRYDHYCPWIYNYIGFRNHKIFIYFILLLDLGILALAKLCLEYFDELKDHAKNKDALKCSILSKDLCAGFTYDPFTLFLLEWVCVQGMWILALSFVQFFECLKGVTEHEFAHWQRRNRGVVGREHVFNTAPEELMEEDPEEERNKLRSLGAAGQRHCCSTLTTATGFDRFLSVIGSSLGRQPRTTHNPINYPIETDYGWKQNLKDFWLTSDISAPMWRRILLPPVGTRGLLNGQEVDYQKLYNLPERVISIEEIV.

At 1–308 the chain is on the cytoplasmic side; sequence MSGQLNVAED…HAKMVTFFTP (308 aa). ANK repeat units follow at residues 54–84, 90–119, 124–153, 157–187, 191–220, and 224–253; these read PTLVKYHAACQRGDLKTVKDMIEAGVIDVKA, EQVSGLHWASANNRLNLVRYLIAQGADVNI, LEATPLHWASKSGYVYIVHCLLEHGADPLI, QGYNLLHTSTFSSEVMLITYVLFTGQIPVDS, TGKTALHWAAYQGDPNTVEALLKFDADVRV, and GGFTPLHWATVKGHPHVLKALIEHGSDVFL. A helical transmembrane segment spans residues 309–329; sequence WLILGLILSFFAYFSILLAIL. Residues 330–331 are Lumenal-facing; sequence GC. Residues 332–352 form a helical membrane-spanning segment; that stretch reads LLTVLAAGYGLYNFVFPSFIL. Over 353 to 360 the chain is Cytoplasmic; sequence MKRIVIFK. Residues 361–381 form a helical membrane-spanning segment; sequence TPLLAGILSGTIFWLLYVWLF. Over 382 to 392 the chain is Lumenal; it reads KMLPATFDDEP. The chain crosses the membrane as a helical span at residues 393–413; the sequence is ILNLTVFALFAGVVFLLTKLL. The Cytoplasmic segment spans residues 414 to 489; that stretch reads QSDPGYIVPA…YNYIGFRNHK (76 aa). Residues 446–496 enclose the DHHC domain; that stretch reads HFCIHSWIRLPLRAKYKRFVHSVILRYDHYCPWIYNYIGFRNHKIFIYFIL. The active-site S-palmitoyl cysteine intermediate is the Cys476. A helical transmembrane segment spans residues 490–510; the sequence is IFIYFILLLDLGILALAKLCL. Over 511 to 543 the chain is Lumenal; it reads EYFDELKDHAKNKDALKCSILSKDLCAGFTYDP. Residues 544 to 564 form a helical membrane-spanning segment; the sequence is FTLFLLEWVCVQGMWILALSF. At 565-724 the chain is on the cytoplasmic side; that stretch reads VQFFECLKGV…ERVISIEEIV (160 aa).

This sequence belongs to the DHHC palmitoyltransferase family. AKR/ZDHHC17 subfamily.

The protein localises to the early endosome membrane. Its subcellular location is the golgi apparatus membrane. It catalyses the reaction L-cysteinyl-[protein] + hexadecanoyl-CoA = S-hexadecanoyl-L-cysteinyl-[protein] + CoA. Palmitoyltransferase specific for casein kinase 1. In Eremothecium gossypii (strain ATCC 10895 / CBS 109.51 / FGSC 9923 / NRRL Y-1056) (Yeast), this protein is Palmitoyltransferase AKR1 (AKR1).